A 508-amino-acid chain; its full sequence is Glycogen synthase (508 aa).

Lys-27 contributes to the ADP-alpha-D-glucose binding site.

It belongs to the glycosyltransferase 1 family. Bacterial/plant glycogen synthase subfamily.

It carries out the reaction [(1-&gt;4)-alpha-D-glucosyl](n) + ADP-alpha-D-glucose = [(1-&gt;4)-alpha-D-glucosyl](n+1) + ADP + H(+). It functions in the pathway glycan biosynthesis; glycogen biosynthesis. In terms of biological role, synthesizes alpha-1,4-glucan chains using ADP-glucose. This chain is Glycogen synthase, found in Photobacterium profundum (strain SS9).